Consider the following 223-residue polypeptide: MIF4G domain-containing protein B (223 aa).

Residues 9–206 form the MIF4G domain; sequence DYKIQGFDAD…LEMIEYRAAG (198 aa).

This sequence belongs to the MIF4GD family. Interacts with eif4g1, eif4g2 and slbp; probably tethered by SLBP to the 3'-end of mRNAs ending with the histone stem-loop, it also interacts with eif4g1 which is bound to their 5'-end.

Its subcellular location is the cytoplasm. The protein resides in the nucleus. Functions in replication-dependent translation of histone mRNAs which differ from other eukaryotic mRNAs in that they do not end with a poly-A tail but a stem-loop. May participate in circularizing those mRNAs specifically enhancing their translation. The chain is MIF4G domain-containing protein B (mif4gd-b) from Xenopus laevis (African clawed frog).